The following is an 86-amino-acid chain: Large ribosomal subunit protein bL27 (86 aa).

The segment covering 1–10 (MAQKKGGGST) has biased composition (gly residues). A disordered region spans residues 1–21 (MAQKKGGGSTRNGRDSESKRL).

This sequence belongs to the bacterial ribosomal protein bL27 family.

The chain is Large ribosomal subunit protein bL27 from Cupriavidus pinatubonensis (strain JMP 134 / LMG 1197) (Cupriavidus necator (strain JMP 134)).